A 238-amino-acid chain; its full sequence is Riboflavin-binding protein (238 aa).

The N-terminal stretch at 1–17 (MLRFAITLFAVITSSTC) is a signal peptide. Position 18 is a pyrrolidone carboxylic acid (glutamine 18). Intrachain disulfides connect cysteine 22–cysteine 49, cysteine 41–cysteine 90, cysteine 50–cysteine 94, cysteine 74–cysteine 155, cysteine 81–cysteine 127, cysteine 116–cysteine 186, cysteine 120–cysteine 169, cysteine 133–cysteine 151, and cysteine 184–cysteine 219. Asparagine 53 is a glycosylation site (N-linked (GlcNAc...) asparagine). Residue asparagine 164 is glycosylated (N-linked (GlcNAc...) asparagine). A phosphoserine mark is found at serine 204, serine 205, serine 208, serine 209, serine 210, serine 212, serine 213, and serine 214.

The protein belongs to the folate receptor family. Post-translationally, plasma and yolk RBPS have the same carbohydrate components, whereas egg-white RBP has a different, ovomucoid-type carbohydrate chain. Plasma RBP has the same C-terminal sequence as the egg-white RBP, which suggests that the C-terminal residues are cleaved off upon incorporation into the oocyte. As to expression, yolk RBP is synthesized in the liver; egg-white RBP is synthesized in the oviduct.

Its function is as follows. Required for the transport of riboflavin to the developing oocyte. The polypeptide is Riboflavin-binding protein (Gallus gallus (Chicken)).